Consider the following 296-residue polypeptide: 33 kDa chaperonin (296 aa).

Cystine bridges form between C238-C240 and C271-C274.

The protein belongs to the HSP33 family. Under oxidizing conditions two disulfide bonds are formed involving the reactive cysteines. Under reducing conditions zinc is bound to the reactive cysteines and the protein is inactive.

The protein resides in the cytoplasm. Its function is as follows. Redox regulated molecular chaperone. Protects both thermally unfolding and oxidatively damaged proteins from irreversible aggregation. Plays an important role in the bacterial defense system toward oxidative stress. The protein is 33 kDa chaperonin of Clostridium botulinum (strain ATCC 19397 / Type A).